A 155-amino-acid polypeptide reads, in one-letter code: UPF0266 membrane protein lin0773 (155 aa).

The next 3 membrane-spanning stretches (helical) occupy residues 8 to 28, 46 to 66, and 70 to 90; these read IFLF…DAVI, RWDG…NTFF, and PFST…ICFF.

This sequence belongs to the UPF0266 family.

The protein localises to the cell membrane. This chain is UPF0266 membrane protein lin0773, found in Listeria innocua serovar 6a (strain ATCC BAA-680 / CLIP 11262).